The following is a 149-amino-acid chain: SsrA-binding protein (149 aa).

Belongs to the SmpB family.

The protein resides in the cytoplasm. Functionally, required for rescue of stalled ribosomes mediated by trans-translation. Binds to transfer-messenger RNA (tmRNA), required for stable association of tmRNA with ribosomes. tmRNA and SmpB together mimic tRNA shape, replacing the anticodon stem-loop with SmpB. tmRNA is encoded by the ssrA gene; the 2 termini fold to resemble tRNA(Ala) and it encodes a 'tag peptide', a short internal open reading frame. During trans-translation Ala-aminoacylated tmRNA acts like a tRNA, entering the A-site of stalled ribosomes, displacing the stalled mRNA. The ribosome then switches to translate the ORF on the tmRNA; the nascent peptide is terminated with the 'tag peptide' encoded by the tmRNA and targeted for degradation. The ribosome is freed to recommence translation, which seems to be the essential function of trans-translation. The protein is SsrA-binding protein of Wolbachia sp. subsp. Brugia malayi (strain TRS).